The primary structure comprises 272 residues: ATP synthase subunit a (272 aa).

6 consecutive transmembrane segments (helical) span residues 41 to 61 (VLNI…LSIF), 110 to 130 (FVWV…FPFI), 143 to 165 (VPSA…ILFY), 188 to 208 (VFFI…PISL), 222 to 242 (IFIL…NVPW), and 243 to 263 (AIFH…LTIV).

Belongs to the ATPase A chain family. In terms of assembly, F-type ATPases have 2 components, CF(1) - the catalytic core - and CF(0) - the membrane proton channel. CF(1) has five subunits: alpha(3), beta(3), gamma(1), delta(1), epsilon(1). CF(0) has three main subunits: a(1), b(2) and c(9-12). The alpha and beta chains form an alternating ring which encloses part of the gamma chain. CF(1) is attached to CF(0) by a central stalk formed by the gamma and epsilon chains, while a peripheral stalk is formed by the delta and b chains.

It is found in the cell membrane. Its function is as follows. Key component of the proton channel; it plays a direct role in the translocation of protons across the membrane. This is ATP synthase subunit a from Buchnera aphidicola subsp. Schizaphis graminum (strain Sg).